Reading from the N-terminus, the 432-residue chain is 3-phosphoshikimate 1-carboxyvinyltransferase (432 aa).

Lysine 25, serine 26, and arginine 30 together coordinate 3-phosphoshikimate. Lysine 25 serves as a coordination point for phosphoenolpyruvate. Phosphoenolpyruvate contacts are provided by glycine 97 and arginine 125. 3-phosphoshikimate contacts are provided by serine 170, glutamine 172, aspartate 318, and lysine 345. A phosphoenolpyruvate-binding site is contributed by glutamine 172. Aspartate 318 functions as the Proton acceptor in the catalytic mechanism. Residues arginine 349 and arginine 393 each contribute to the phosphoenolpyruvate site.

Belongs to the EPSP synthase family. In terms of assembly, monomer.

It localises to the cytoplasm. The enzyme catalyses 3-phosphoshikimate + phosphoenolpyruvate = 5-O-(1-carboxyvinyl)-3-phosphoshikimate + phosphate. Its pathway is metabolic intermediate biosynthesis; chorismate biosynthesis; chorismate from D-erythrose 4-phosphate and phosphoenolpyruvate: step 6/7. Its function is as follows. Catalyzes the transfer of the enolpyruvyl moiety of phosphoenolpyruvate (PEP) to the 5-hydroxyl of shikimate-3-phosphate (S3P) to produce enolpyruvyl shikimate-3-phosphate and inorganic phosphate. This Geobacillus thermodenitrificans (strain NG80-2) protein is 3-phosphoshikimate 1-carboxyvinyltransferase.